We begin with the raw amino-acid sequence, 1470 residues long: Roundabout homolog 2 (1470 aa).

A signal peptide spans 1–21; that stretch reads MNPLMFTLLLLFGFLCIQIDG. Topologically, residues 22–863 are extracellular; sequence SRLRQEDFPP…EQITDVVKQP (842 aa). 5 consecutive Ig-like C2-type domains span residues 31–127, 133–220, 225–309, 318–413, and 422–508; these read PRIV…ASLE, DDFR…AELT, PTFL…ATLT, PQFV…LEVT, and PIIL…AVLD. The cysteines at positions 52 and 110 are disulfide-linked. Asn123 is a glycosylation site (N-linked (GlcNAc...) asparagine). Intrachain disulfides connect Cys154–Cys203, Cys246–Cys293, and Cys339–Cys395. Asn430 carries an N-linked (GlcNAc...) asparagine glycan. A disulfide bridge links Cys443 with Cys492. 3 consecutive Fibronectin type-III domains span residues 528–622, 641–739, and 743–840; these read PPSK…TQDI, VVVR…TEEA, and PPQS…IGGR. 4 N-linked (GlcNAc...) asparagine glycosylation sites follow: Asn756, Asn786, Asn793, and Asn849. A helical transmembrane segment spans residues 864-884; sequence AFIAGIGGACWVILMGFSIWL. Topologically, residues 885-1470 are cytoplasmic; the sequence is YWRRKKRKGL…GSNSQGQFTE (586 aa). Disordered stretches follow at residues 1036-1089, 1129-1159, 1190-1371, and 1383-1470; these read GFGY…LPGT, EDRVPTPPVRGVASSPAISFGQQSTATLTPS, IQSN…DCPA, and DWIN…QFTE. Over residues 1144-1158 the composition is skewed to polar residues; the sequence is PAISFGQQSTATLTP. Thr1157 carries the phosphothreonine modification. Ser1159 is subject to Phosphoserine. The segment covering 1194–1203 has biased composition (pro residues); it reads TPPPQPPAPP. The span at 1215 to 1231 shows a compositional bias: acidic residues; the sequence is LETDVPDEDADDEEEPL. A compositionally biased stretch (polar residues) spans 1243–1288; the sequence is TPGSSMDNLDSSVTGKAFSSSQRQRPTSPFSTDSNTSAAQNQSQRP. Residues 1315 to 1325 show a composition bias toward pro residues; sequence DLPPPPDPPPG. Residues 1328–1343 are compositionally biased toward polar residues; sequence LRQQIGLSQHSGNVEN. Residues 1413-1437 are compositionally biased toward low complexity; it reads SKPSFPSPGGHSSSGTSSSKGSTGP. Positions 1461-1470 are enriched in polar residues; the sequence is GSNSQGQFTE.

Belongs to the immunoglobulin superfamily. ROBO family. As to quaternary structure, interacts with SLIT2. Expressed in embryonal spinal cord.

It is found in the membrane. Functionally, receptor for SLIT2, and probably SLIT1, which are thought to act as molecular guidance cue in cellular migration, including axonal navigation at the ventral midline of the neural tube and projection of axons to different regions during neuronal development. In Mus musculus (Mouse), this protein is Roundabout homolog 2 (Robo2).